A 413-amino-acid chain; its full sequence is MPQQNYLDELTPGFTPLLAIKEASRCLLCHDAPCSQACPAQTDPGKFIRSIYFRNFKGAAETIRENNALGAVCARVCPTEKLCQRGCTRSGIDKPIDIARLQRFITDFEQQTAMQIYQPGSKTRGKVAIIGAGPAGLQASVTLTHLGYDVTIYEKQPQPGGWLRHGIPAFRLPQSVLDQEIARIVEMGVNIKCNCDVGGSLSLAQLKAEYRAVLMTVGMSCGSDLPLFEQASHVEIAVDFLQRARQADGDISVPRSALIIGGGDVAMDVASTLKILGCPSVTCVAREELAEFPASEKEFTSTQALGVSIIDGFTPVAVSGNKVTFHHVRHSGELTLEAENIILAVGQHARLDNFAEIKAQHNIIDTHNYQTDDPAIFAAGDIVKGDKTVVYAVKTGKEAAQAIHHYLEEACSC.

An NAD(+)-binding site is contributed by E287.

It belongs to the NADH dehydrogenase family. As to quaternary structure, heterotetramer of 2 PreA and 2 PreT subunits.

The enzyme catalyses 5,6-dihydrouracil + NAD(+) = uracil + NADH + H(+). It catalyses the reaction 5,6-dihydrothymine + NAD(+) = thymine + NADH + H(+). Functionally, involved in pyrimidine base degradation. Catalyzes physiologically the reduction of uracil to 5,6-dihydrouracil (DHU) by using NADH as a specific cosubstrate. It also catalyzes the reverse reaction and the reduction of thymine to 5,6-dihydrothymine (DHT). This Salmonella typhi protein is NAD-dependent dihydropyrimidine dehydrogenase subunit PreT homolog (preT).